The chain runs to 357 residues: UDP-N-acetylglucosamine--N-acetylmuramyl-(pentapeptide) pyrophosphoryl-undecaprenol N-acetylglucosamine transferase (357 aa).

UDP-N-acetyl-alpha-D-glucosamine is bound by residues 12–14, N124, R163, S189, I243, 262–267, and Q288; these read TGG and ALTVSE.

It belongs to the glycosyltransferase 28 family. MurG subfamily.

It is found in the cell inner membrane. It catalyses the reaction di-trans,octa-cis-undecaprenyl diphospho-N-acetyl-alpha-D-muramoyl-L-alanyl-D-glutamyl-meso-2,6-diaminopimeloyl-D-alanyl-D-alanine + UDP-N-acetyl-alpha-D-glucosamine = di-trans,octa-cis-undecaprenyl diphospho-[N-acetyl-alpha-D-glucosaminyl-(1-&gt;4)]-N-acetyl-alpha-D-muramoyl-L-alanyl-D-glutamyl-meso-2,6-diaminopimeloyl-D-alanyl-D-alanine + UDP + H(+). Its pathway is cell wall biogenesis; peptidoglycan biosynthesis. Cell wall formation. Catalyzes the transfer of a GlcNAc subunit on undecaprenyl-pyrophosphoryl-MurNAc-pentapeptide (lipid intermediate I) to form undecaprenyl-pyrophosphoryl-MurNAc-(pentapeptide)GlcNAc (lipid intermediate II). The chain is UDP-N-acetylglucosamine--N-acetylmuramyl-(pentapeptide) pyrophosphoryl-undecaprenol N-acetylglucosamine transferase from Pseudomonas paraeruginosa (strain DSM 24068 / PA7) (Pseudomonas aeruginosa (strain PA7)).